Consider the following 1130-residue polypeptide: Transmembrane channel-like protein 3 (1130 aa).

The Cytoplasmic segment spans residues 1-148 (MKTSKASQRY…ASYFIFLRWL (148 aa)). Residues 149-169 (FGINIVLTVMTGAFVVLPELI) traverse the membrane as a helical segment. At 170–192 (AGQPFGSTASKTIPREQITSAQD) the chain is on the extracellular side. A helical transmembrane segment spans residues 193 to 213 (LDTVWSLGGYLQYSVLFYGYY). The Cytoplasmic segment spans residues 214–225 (GRERRIGRAGYR). Residues 226–246 (LPLAYFLVGMAVFAYSFIVLL) traverse the membrane as a helical segment. Residues 247 to 319 (KRMAKNSRTS…KNMAVTVCLR (73 aa)) lie on the Extracellular side of the membrane. The N-linked (GlcNAc...) asparagine glycan is linked to Asn264. The helical transmembrane segment at 320 to 340 (IIANILVLLSLAGSIYLIYFV) threads the bilayer. Residues 341-361 (VDRSQKLEQSKKELTLWEKNE) lie on the Cytoplasmic side of the membrane. Residues 362 to 382 (VSVVVSLVTMLAPSAFDLIAA) traverse the membrane as a helical segment. Topologically, residues 383 to 393 (LEMYHPRTTLR) are extracellular. The chain crosses the membrane as a helical span at residues 394 to 414 (FQLARVLVLYLGNLYSLIIAL). Over 415–509 (LDKVNSMNIE…CWETYVGQEM (95 aa)) the chain is Cytoplasmic. A helical membrane pass occupies residues 510-530 (LKLSVIDMLFTVASILLIDFF). Residues 531–570 (RGLFVRYLSDYWCWDLESKFPEYGEFKIAENVLHLVYNQG) lie on the Extracellular side of the membrane. A helical membrane pass occupies residues 571–591 (MIWMGAFFSPCLPAFNVLKLI). Residues 592–619 (GLMYLRSWAVLTCNVPHQQVFRASRSNN) are Cytoplasmic-facing. Residues 620-640 (FYLAMLLFMLFLCMLPTIFAI) form a helical membrane-spanning segment. The Extracellular portion of the chain corresponds to 641–680 (VHYKPSLNCGPFSGQEKIYDIVSETIENDFPTWFHAVVGH). A helical membrane pass occupies residues 681 to 701 (ISSPVVILPAVLLLFMLIYYL). Residues 702-1130 (QSIARSLKLS…DLNDLICSNV (429 aa)) lie on the Cytoplasmic side of the membrane. Disordered regions lie at residues 742 to 774 (DARQAGSATEAESSENSKPKTLQARIQTHEESS), 819 to 893 (RSLP…FQPI), 999 to 1019 (SSCFYTGDRSENNTRDPKYQR), 1033 to 1059 (QLERPTFVHRKPRSRNGQYPQHALKAR), and 1097 to 1116 (QGRFPRSASQLGRRKAKSRQ). A compositionally biased stretch (polar residues) spans 747-767 (GSATEAESSENSKPKTLQARI). Residues 840-850 (SRSRPEQDTNR) are compositionally biased toward basic and acidic residues. Polar residues predominate over residues 856–876 (CSSTSNLHKNRSCSSVTQTQP). Basic and acidic residues-rich tracts occupy residues 878–890 (KDVRSEPLSRKDF) and 1006–1017 (DRSENNTRDPKY). Over residues 1097-1106 (QGRFPRSASQ) the composition is skewed to polar residues.

Belongs to the TMC family. In terms of tissue distribution, detected in most neuronal organs and also in some non-neuronal tissues.

It is found in the membrane. Its function is as follows. Probable component of an ion channel. Molecular function hasn't been characterized yet. This chain is Transmembrane channel-like protein 3, found in Mus musculus (Mouse).